The chain runs to 47 residues: PhoP/PhoQ regulator MgrB (47 aa).

A helical membrane pass occupies residues 6 to 26 (WVVLGIVVVVCLLLWAQVFNI).

Belongs to the MgrB family. May form homooligomers. Probably interacts with the periplasmic domain of PhoQ.

The protein localises to the cell inner membrane. PhoP-regulated transcription is redox-sensitive, being activated when the periplasm becomes more reducing. MgrB acts between DsbA/DsbB and PhoP/PhoQ in this pathway. Represses PhoP/PhoQ signaling, possibly by binding to the periplasmic domain of PhoQ, altering its activity and that of downstream effector PhoP. The chain is PhoP/PhoQ regulator MgrB from Salmonella agona (strain SL483).